Reading from the N-terminus, the 82-residue chain is Small ribosomal subunit protein bS16 (82 aa).

It belongs to the bacterial ribosomal protein bS16 family.

This chain is Small ribosomal subunit protein bS16, found in Deinococcus geothermalis (strain DSM 11300 / CIP 105573 / AG-3a).